Consider the following 623-residue polypeptide: Translation initiation factor IF-2 (623 aa).

The span at 1–18 (MTLNKKTNNENSSKTTPK) shows a compositional bias: low complexity. Disordered regions lie at residues 1–21 (MTLNKKTNNENSSKTTPKLSK) and 92–115 (PQKEQTPPQLQPQKPPLTKSKLQA). The tr-type G domain maps to 125-293 (KTPPIVTIMG…ILLFSEIQNL (169 aa)). Positions 134–141 (GHVDHGKT) are G1. 134 to 141 (GHVDHGKT) lines the GTP pocket. Residues 159 to 163 (GITQH) form a G2 region. The interval 180–183 (DTPG) is G3. GTP-binding positions include 180–184 (DTPGH) and 234–237 (NKVD). The segment at 234 to 237 (NKVD) is G4. Residues 270 to 272 (SAL) form a G5 region.

It belongs to the TRAFAC class translation factor GTPase superfamily. Classic translation factor GTPase family. IF-2 subfamily.

It is found in the cytoplasm. Its function is as follows. One of the essential components for the initiation of protein synthesis. Protects formylmethionyl-tRNA from spontaneous hydrolysis and promotes its binding to the 30S ribosomal subunits. Also involved in the hydrolysis of GTP during the formation of the 70S ribosomal complex. In Aster yellows witches'-broom phytoplasma (strain AYWB), this protein is Translation initiation factor IF-2.